The sequence spans 271 residues: Putative phosphoenolpyruvate synthase regulatory protein (271 aa).

151 to 158 is an ADP binding site; it reads GVSRSGKT.

This sequence belongs to the pyruvate, phosphate/water dikinase regulatory protein family. PSRP subfamily.

The catalysed reaction is [pyruvate, water dikinase] + ADP = [pyruvate, water dikinase]-phosphate + AMP + H(+). The enzyme catalyses [pyruvate, water dikinase]-phosphate + phosphate + H(+) = [pyruvate, water dikinase] + diphosphate. Functionally, bifunctional serine/threonine kinase and phosphorylase involved in the regulation of the phosphoenolpyruvate synthase (PEPS) by catalyzing its phosphorylation/dephosphorylation. The sequence is that of Putative phosphoenolpyruvate synthase regulatory protein from Burkholderia mallei (strain NCTC 10247).